We begin with the raw amino-acid sequence, 132 residues long: Small ribosomal subunit protein uS8 (132 aa).

Belongs to the universal ribosomal protein uS8 family. In terms of assembly, part of the 30S ribosomal subunit. Contacts proteins S5 and S12.

In terms of biological role, one of the primary rRNA binding proteins, it binds directly to 16S rRNA central domain where it helps coordinate assembly of the platform of the 30S subunit. This Streptomyces avermitilis (strain ATCC 31267 / DSM 46492 / JCM 5070 / NBRC 14893 / NCIMB 12804 / NRRL 8165 / MA-4680) protein is Small ribosomal subunit protein uS8.